The chain runs to 102 residues: Small ribosomal subunit protein uS10 (102 aa).

This sequence belongs to the universal ribosomal protein uS10 family. In terms of assembly, part of the 30S ribosomal subunit.

In terms of biological role, involved in the binding of tRNA to the ribosomes. This Arthrobacter sp. (strain FB24) protein is Small ribosomal subunit protein uS10.